A 429-amino-acid chain; its full sequence is Enolase (429 aa).

Q162 lines the (2R)-2-phosphoglycerate pocket. E204 acts as the Proton donor in catalysis. Positions 241, 283, and 310 each coordinate Mg(2+). (2R)-2-phosphoglycerate contacts are provided by K335, R364, S365, and K386. K335 acts as the Proton acceptor in catalysis.

This sequence belongs to the enolase family. Mg(2+) serves as cofactor.

It localises to the cytoplasm. The protein localises to the secreted. The protein resides in the cell surface. The catalysed reaction is (2R)-2-phosphoglycerate = phosphoenolpyruvate + H2O. It participates in carbohydrate degradation; glycolysis; pyruvate from D-glyceraldehyde 3-phosphate: step 4/5. In terms of biological role, catalyzes the reversible conversion of 2-phosphoglycerate (2-PG) into phosphoenolpyruvate (PEP). It is essential for the degradation of carbohydrates via glycolysis. The chain is Enolase from Mycobacterium sp. (strain JLS).